The following is a 1058-amino-acid chain: Carbamoyl phosphate synthase large chain (1058 aa).

Positions 1-401 (MPKRKDIQKI…SLLKACRSLE (401 aa)) are carboxyphosphate synthetic domain. Arginine 129, arginine 169, glycine 175, glycine 176, arginine 208, isoleucine 210, glutamate 215, glycine 241, isoleucine 242, histidine 243, glutamine 284, and glutamate 298 together coordinate ATP. The ATP-grasp 1 domain maps to 133–327 (KQLMQELDQP…IAKLAAKIAV (195 aa)). 3 residues coordinate Mg(2+): glutamine 284, glutamate 298, and asparagine 300. Mn(2+) is bound by residues glutamine 284, glutamate 298, and asparagine 300. The interval 402 to 546 (IGVCHNEMTS…YSTYELENES (145 aa)) is oligomerization domain. The interval 547–929 (VQSNKESILV…ALYKAFEANN (383 aa)) is carbamoyl phosphate synthetic domain. The ATP-grasp 2 domain occupies 671-861 (EKALKELGIP…MAQIATKLIL (191 aa)). ATP contacts are provided by arginine 707, serine 746, isoleucine 748, glutamate 752, glycine 777, valine 778, histidine 779, serine 780, glutamine 820, and glutamate 832. Residues glutamine 820, glutamate 832, and asparagine 834 each coordinate Mg(2+). 3 residues coordinate Mn(2+): glutamine 820, glutamate 832, and asparagine 834. An MGS-like domain is found at 930 to 1058 (SHLSEFGQIV…ESRCFNIEAI (129 aa)). The segment at 930-1058 (SHLSEFGQIV…ESRCFNIEAI (129 aa)) is allosteric domain.

Belongs to the CarB family. Composed of two chains; the small (or glutamine) chain promotes the hydrolysis of glutamine to ammonia, which is used by the large (or ammonia) chain to synthesize carbamoyl phosphate. Tetramer of heterodimers (alpha,beta)4. It depends on Mg(2+) as a cofactor. The cofactor is Mn(2+).

The catalysed reaction is hydrogencarbonate + L-glutamine + 2 ATP + H2O = carbamoyl phosphate + L-glutamate + 2 ADP + phosphate + 2 H(+). It carries out the reaction hydrogencarbonate + NH4(+) + 2 ATP = carbamoyl phosphate + 2 ADP + phosphate + 2 H(+). The protein operates within amino-acid biosynthesis; L-arginine biosynthesis; carbamoyl phosphate from bicarbonate: step 1/1. It functions in the pathway pyrimidine metabolism; UMP biosynthesis via de novo pathway; (S)-dihydroorotate from bicarbonate: step 1/3. Its function is as follows. Large subunit of the glutamine-dependent carbamoyl phosphate synthetase (CPSase). CPSase catalyzes the formation of carbamoyl phosphate from the ammonia moiety of glutamine, carbonate, and phosphate donated by ATP, constituting the first step of 2 biosynthetic pathways, one leading to arginine and/or urea and the other to pyrimidine nucleotides. The large subunit (synthetase) binds the substrates ammonia (free or transferred from glutamine from the small subunit), hydrogencarbonate and ATP and carries out an ATP-coupled ligase reaction, activating hydrogencarbonate by forming carboxy phosphate which reacts with ammonia to form carbamoyl phosphate. In Streptococcus pyogenes serotype M6 (strain ATCC BAA-946 / MGAS10394), this protein is Carbamoyl phosphate synthase large chain.